Here is a 342-residue protein sequence, read N- to C-terminus: uncharacterized protein (342 aa).

Positions 1–18 are cleaved as a signal peptide; sequence MWKKLMLLLLMAIPLVSA.

This is an uncharacterized protein from Methanocaldococcus jannaschii (strain ATCC 43067 / DSM 2661 / JAL-1 / JCM 10045 / NBRC 100440) (Methanococcus jannaschii).